The following is a 389-amino-acid chain: Flagellar P-ring protein (389 aa).

A signal peptide spans 1–33; that stretch reads MRPLVAARRRAAACCALAACMLALAFAPAAARA.

It belongs to the FlgI family. As to quaternary structure, the basal body constitutes a major portion of the flagellar organelle and consists of four rings (L,P,S, and M) mounted on a central rod.

The protein localises to the periplasm. It is found in the bacterial flagellum basal body. In terms of biological role, assembles around the rod to form the L-ring and probably protects the motor/basal body from shearing forces during rotation. The polypeptide is Flagellar P-ring protein (Burkholderia pseudomallei (strain K96243)).